Reading from the N-terminus, the 195-residue chain is uncharacterized protein (195 aa).

The N-terminal stretch at 1 to 16 is a signal peptide; that stretch reads MIRTIIVFMLLTISFG.

This is an uncharacterized protein from Acanthamoeba polyphaga mimivirus (APMV).